The following is a 209-amino-acid chain: Protein GrpE (209 aa).

A disordered region spans residues 1–63; sequence MKKSRKKENM…NPEEACREEN (63 aa). Basic and acidic residues-rich tracts occupy residues 7–42 and 50–63; these read KENM…KVSP and EAEK…REEN.

This sequence belongs to the GrpE family. In terms of assembly, homodimer.

The protein resides in the cytoplasm. Functionally, participates actively in the response to hyperosmotic and heat shock by preventing the aggregation of stress-denatured proteins, in association with DnaK and GrpE. It is the nucleotide exchange factor for DnaK and may function as a thermosensor. Unfolded proteins bind initially to DnaJ; upon interaction with the DnaJ-bound protein, DnaK hydrolyzes its bound ATP, resulting in the formation of a stable complex. GrpE releases ADP from DnaK; ATP binding to DnaK triggers the release of the substrate protein, thus completing the reaction cycle. Several rounds of ATP-dependent interactions between DnaJ, DnaK and GrpE are required for fully efficient folding. In Methanosarcina mazei (strain ATCC BAA-159 / DSM 3647 / Goe1 / Go1 / JCM 11833 / OCM 88) (Methanosarcina frisia), this protein is Protein GrpE.